Here is an 898-residue protein sequence, read N- to C-terminus: MTEESEETVLYIEHRYVCSECNQLYGSLEEVLVHQNSHVPQQHFELVGVADPGVTVATEATSGTGLYQTLIQESQYQCLECGQLLLSPSQLLEHQELHLKMMAPQEAVPAEPPPKVPPLSSSTIHYECVDCKALFASQEMWLSHRQTHLRATPNKAPAPVVLGSPVVLGPPVGQARVAVEHSYRKAEEGGEGAAVPSVAAATEMVTEVELLLYKCSECSQLFQMPADFLEHQATHFPAPVPEAEEPATQQETLVPSPTEAAVSQPDPLPASDHSYELRNELRNGEAMGRDRRGRKPRRSSSGESGATQELFCSACDQIFLSPHQLQQHLRSHREGVFKCPLCSRVFPSPSSLDQHLGDHSSESHFLCVDCGLAFGTEALLLAHRRAHTPNPLHSCPCGKTFVNLTKFLYHRRTHGAGGVPLPTTPVPPEEPAISFPEPAPAETGELEAPELPVSEESSAEPAAPGTYRCLLCSREFSKALQLTRHQRFVHRLERRHKCSICGKMFKKKSHVRNHLRTHTGERPFPCPDCSKPFNSPANLARHRLTHTGERPYRCGDCGKAFTQSSTLRQHRLVHAQHFPYRCQECGVRFHRPYRLLMHRYHHTGEYPYKCRECPRSFLLRRLLEVHQLVVHAGRQPHRCPSCGAAFPSSLRLREHRCAAAAAQAPRRFECGTCGKKVGSAARLQAHEAAHAAAGPGEVLAKEPPAPRAARATRTPVAPSPTALGGTTSAAPAAPARRRGLECSECKKLFSTETSLQVHRRIHTGERPYPCPDCGKAFRQSTHLKDHRRLHTGERPFACEVCGKAFAISMRLAEHRRIHTGERPYSCPDCGKSYRSFSNLWKHRKTHQQQHQAAVRQQLAEAEAAVGLAVMETAVEALPLVEAIEIYPLAEADGVQISG.

3 C2H2-type zinc fingers span residues 16–38 (YVCSECNQLYGSLEEVLVHQNSH), 76–98 (YQCLECGQLLLSPSQLLEHQELH), and 126–148 (YECVDCKALFASQEMWLSHRQTH). Ser164 bears the Phosphoserine mark. Residues 213–235 (YKCSECSQLFQMPADFLEHQATH) form a C2H2-type 4 zinc finger. The tract at residues 243–305 (AEEPATQQET…PRRSSSGESG (63 aa)) is disordered. Residues 273–290 (HSYELRNELRNGEAMGRD) are compositionally biased toward basic and acidic residues. Ser301 is modified (phosphoserine). 4 C2H2-type zinc fingers span residues 310 to 332 (LFCSACDQIFLSPHQLQQHLRSH), 337 to 359 (FKCPLCSRVFPSPSSLDQHLGDH), 365 to 387 (FLCVDCGLAFGTEALLLAHRRAH), and 393 to 414 (HSCPCGKTFVNLTKFLYHRRTH). The segment at 417-460 (GGVPLPTTPVPPEEPAISFPEPAPAETGELEAPELPVSEESSAE) is disordered. C2H2-type zinc fingers lie at residues 467-490 (YRCLLCSREFSKALQLTRHQRFVH), 496-518 (HKCSICGKMFKKKSHVRNHLRTH), 524-546 (FPCPDCSKPFNSPANLARHRLTH), 552-574 (YRCGDCGKAFTQSSTLRQHRLVH), 580-602 (YRCQECGVRFHRPYRLLMHRYHH), and 608-631 (YKCRECPRSFLLRRLLEVHQLVVH). Residues 637–660 (HRCPSCGAAFPSSLRLREHRCAAA) form a C2H2-type 15; degenerate zinc finger. The segment at 668–690 (FECGTCGKKVGSAARLQAHEAAH) adopts a C2H2-type 16 zinc-finger fold. Residues 691–735 (AAAGPGEVLAKEPPAPRAARATRTPVAPSPTALGGTTSAAPAAPA) form a disordered region. Over residues 707 to 734 (RAARATRTPVAPSPTALGGTTSAAPAAP) the composition is skewed to low complexity. Position 719 is a phosphoserine (Ser719). Thr726 is modified (phosphothreonine). C2H2-type zinc fingers lie at residues 740–762 (LECSECKKLFSTETSLQVHRRIH), 768–790 (YPCPDCGKAFRQSTHLKDHRRLH), 796–818 (FACEVCGKAFAISMRLAEHRRIH), and 824–846 (YSCPDCGKSYRSFSNLWKHRKTH). Residue Arg834 is modified to Asymmetric dimethylarginine.

This sequence belongs to the krueppel C2H2-type zinc-finger protein family.

Its subcellular location is the nucleus. May be involved in transcriptional regulation. In Rattus norvegicus (Rat), this protein is Zinc finger protein 574 (Znf574).